The following is a 253-amino-acid chain: 5'-nucleotidase SurE (253 aa).

Asp8, Asp9, Ser39, and Asn92 together coordinate a divalent metal cation.

The protein belongs to the SurE nucleotidase family. A divalent metal cation is required as a cofactor.

It localises to the cytoplasm. It catalyses the reaction a ribonucleoside 5'-phosphate + H2O = a ribonucleoside + phosphate. In terms of biological role, nucleotidase that shows phosphatase activity on nucleoside 5'-monophosphates. This Burkholderia mallei (strain NCTC 10247) protein is 5'-nucleotidase SurE.